The following is a 63-amino-acid chain: Large ribosomal subunit protein uL30 (63 aa).

It belongs to the universal ribosomal protein uL30 family. As to quaternary structure, part of the 50S ribosomal subunit.

The sequence is that of Large ribosomal subunit protein uL30 from Bradyrhizobium sp. (strain BTAi1 / ATCC BAA-1182).